Reading from the N-terminus, the 180-residue chain is Large ribosomal subunit protein uL6 (180 aa).

Belongs to the universal ribosomal protein uL6 family. As to quaternary structure, part of the 50S ribosomal subunit.

Its function is as follows. This protein binds to the 23S rRNA, and is important in its secondary structure. It is located near the subunit interface in the base of the L7/L12 stalk, and near the tRNA binding site of the peptidyltransferase center. The chain is Large ribosomal subunit protein uL6 from Thermoanaerobacter sp. (strain X514).